The following is a 314-amino-acid chain: tRNA dimethylallyltransferase (314 aa).

36–43 provides a ligand contact to ATP; the sequence is GPTASGKT. Residue 38–43 participates in substrate binding; sequence TASGKT. The interaction with substrate tRNA stretch occupies residues 61–64; that stretch reads DSVQ.

Belongs to the IPP transferase family. Monomer. The cofactor is Mg(2+).

It catalyses the reaction adenosine(37) in tRNA + dimethylallyl diphosphate = N(6)-dimethylallyladenosine(37) in tRNA + diphosphate. Functionally, catalyzes the transfer of a dimethylallyl group onto the adenine at position 37 in tRNAs that read codons beginning with uridine, leading to the formation of N6-(dimethylallyl)adenosine (i(6)A). In Sorangium cellulosum (strain So ce56) (Polyangium cellulosum (strain So ce56)), this protein is tRNA dimethylallyltransferase.